The chain runs to 624 residues: DNA damage response protein Mdb1 (624 aa).

3 disordered regions span residues 177-237, 249-386, and 591-624; these read ERIP…DDES, GETK…KNKH, and IGKR…EQRT. Composition is skewed to basic and acidic residues over residues 200-217 and 225-235; these read DEKL…HSSD and EDQKQLNKTDD. Residues 250 to 263 show a composition bias toward polar residues; sequence ETKSPSSVSQSLSG. 2 positions are modified to phosphoserine: Ser253 and Ser283. Residues 294–305 show a composition bias toward low complexity; the sequence is NISDSSIKNNSI. Composition is skewed to basic and acidic residues over residues 306–316 and 325–352; these read HSDEVNPEVRP and EESK…REAE. Over residues 356–386 the composition is skewed to polar residues; it reads ISTNYSFPSSSLEDQPDKNVQSSAVENKNKH. Residues 376–468 enclose the BRCT domain; it reads QSSAVENKNK…KVLDFRSYKY (93 aa).

Homodimer. Interacts (via BRCT domain) with hta1 peptide containing the S/T-Q motif in vitro; this interaction requires phosphorylation of the hta1 peptide at the S/T-Q motif.

The protein resides in the nucleus. It localises to the chromosome. Its subcellular location is the cytoplasm. It is found in the cytoskeleton. The protein localises to the spindle. Involved in DNA damage response (DDR) mediated through its interaction with phosphorylated H2A proteins hta1 and hta2 which mark the discrete foci of DNA damage. This is DNA damage response protein Mdb1 from Schizosaccharomyces pombe (strain 972 / ATCC 24843) (Fission yeast).